The sequence spans 1430 residues: Target of rapamycin complex 2 subunit TSC11 (1430 aa).

The tract at residues 1–62 is disordered; it reads MSIPHSAKQS…TITNESSKRN (62 aa). Polar residues-rich tracts occupy residues 7–26 and 35–44; these read AKQS…TTPL and NSSTQISSAK. S19 carries the post-translational modification Phosphoserine. The span at 45–57 shows a compositional bias: low complexity; sequence NITSSSPSTITNE. S81, S84, S87, and S141 each carry phosphoserine. Residues 91–180 are a coiled coil; that stretch reads ARRTRSTMTK…EKHIFDLKQQ (90 aa). A disordered region spans residues 182-285; that stretch reads DKKRQRSLTT…NLTGDTEKDL (104 aa). The segment covering 233–265 has biased composition (polar residues); that stretch reads TTPTSGTERNSQQNLNRNSTVNSRNNENHSTLS. The region spanning 995–1100 is the N-terminal Ras-GEF domain; sequence SVVAVADQAL…FQQKSRLPLH (106 aa).

It belongs to the RICTOR family. In terms of assembly, the target of rapamycin complex 2 (TORC2) is composed of at least AVO1, AVO2, BIT61, LST8, TOR2 and TSC11. TORC2 forms a homodimer. Contrary to TORC1, TORC2 does not bind to and is not sensitive to FKBP-rapamycin. TSC11 binds to the N-terminal HEAT repeat region in TOR2 and is required for TORC2 integrity by tethering AVO1 and AVO2 to the complex. Phosphorylated by TOR2; when part of TORC2.

The protein localises to the cell membrane. It is found in the vacuole membrane. In terms of biological role, essential component of TORC2, which regulates cell cycle-dependent polarization of the actin-cytoskeleton and cell wall integrity. TORC2 controls polarity of the actin cytoskeleton, which is required for orienting the secretory pathway toward discrete growth sites, via the RHO1/PKC1/MAPK cell integrity pathway. TSC11 may exert its functions through two distinct mechanisms, one mediated by AVO1 and the other mediated by AVO2 and SLM1. The chain is Target of rapamycin complex 2 subunit TSC11 (TSC11) from Saccharomyces cerevisiae (strain ATCC 204508 / S288c) (Baker's yeast).